Reading from the N-terminus, the 101-residue chain is Protein translation factor SUI1 homolog (101 aa).

The protein belongs to the SUI1 family.

This Aeropyrum pernix (strain ATCC 700893 / DSM 11879 / JCM 9820 / NBRC 100138 / K1) protein is Protein translation factor SUI1 homolog.